Consider the following 257-residue polypeptide: Small ribosomal subunit protein uS2 (257 aa).

It belongs to the universal ribosomal protein uS2 family.

The chain is Small ribosomal subunit protein uS2 from Trichlorobacter lovleyi (strain ATCC BAA-1151 / DSM 17278 / SZ) (Geobacter lovleyi).